Reading from the N-terminus, the 328-residue chain is Zinc transporter ZIP13 (328 aa).

The Lumenal portion of the chain corresponds to 1 to 7 (MPGCPCP). The chain crosses the membrane as a helical span at residues 8-28 (GCGMAGPRLLFLTALALELLG). Topologically, residues 29–68 (RAGGSQPALRSRGTATACRLDNKESESWGALLSGERLDTW) are cytoplasmic. The chain crosses the membrane as a helical span at residues 69 to 89 (ICSLLGSLMVGLSGVFPLLVI). The Lumenal portion of the chain corresponds to 90–108 (PLEMGTMLRSEAGAWHLKQ). Residues 109–129 (LLSFALGGLLGNVFLHLLPEA) traverse the membrane as a helical segment. At 130–149 (WAYTCSASPGGEGQSLQQQQ) the chain is on the cytoplasmic side. A helical transmembrane segment spans residues 150–170 (QLGLWVIAGILTFLALEKMFL). At 171–199 (DSKEEGTSQVSGYLNLLANTIDNFTHGLA) the chain is on the lumenal side. The helical transmembrane segment at 200–220 (VAASFLVSKKIGLLTTMAILL) threads the bilayer. The XEXPHE-motif motif lies at 221 to 226 (HEIPHE). At 221–242 (HEIPHEVGDFAILLRAGFDRWS) the chain is on the cytoplasmic side. The chain crosses the membrane as a helical span at residues 243–263 (AAKLQLSTALGGLLGAGFAIC). Residues 264 to 273 (TQSPKGVEET) lie on the Lumenal side of the membrane. The chain crosses the membrane as a helical span at residues 274 to 294 (AAWVLPFTSGGFLYIALVNVL). At 295–306 (PDLLEEEDPWRS) the chain is on the cytoplasmic side. A helical transmembrane segment spans residues 307-327 (LQQLLLLCAGIVVMVLFSLFV). A topological domain (lumenal) is located at residue D328.

It belongs to the ZIP transporter (TC 2.A.5) family. In terms of assembly, homodimer.

Its subcellular location is the golgi apparatus membrane. The protein resides in the cytoplasmic vesicle membrane. The protein localises to the endoplasmic reticulum membrane. The catalysed reaction is Zn(2+)(in) = Zn(2+)(out). Functionally, functions as a zinc transporter transporting Zn(2+) from the Golgi apparatus to the cytosol and thus influences the zinc level at least in areas of the cytosol. May regulate beige adipocyte differentiation. In Pongo abelii (Sumatran orangutan), this protein is Zinc transporter ZIP13.